Consider the following 146-residue polypeptide: Large ribosomal subunit protein uL15 (146 aa).

The interval 1 to 65 (MSDIQLNTLK…GQMPLQRRLP (65 aa)) is disordered. A compositionally biased stretch (gly residues) spans 24–34 (RGIGSGLGKTA).

Belongs to the universal ribosomal protein uL15 family. In terms of assembly, part of the 50S ribosomal subunit.

Binds to the 23S rRNA. The chain is Large ribosomal subunit protein uL15 from Bordetella petrii (strain ATCC BAA-461 / DSM 12804 / CCUG 43448).